The chain runs to 502 residues: Probable cytosol aminopeptidase (502 aa).

Mn(2+) is bound by residues lysine 269 and aspartate 274. The active site involves lysine 281. 3 residues coordinate Mn(2+): aspartate 292, aspartate 351, and glutamate 353. Residue arginine 355 is part of the active site.

The protein belongs to the peptidase M17 family. Mn(2+) serves as cofactor.

Its subcellular location is the cytoplasm. It catalyses the reaction Release of an N-terminal amino acid, Xaa-|-Yaa-, in which Xaa is preferably Leu, but may be other amino acids including Pro although not Arg or Lys, and Yaa may be Pro. Amino acid amides and methyl esters are also readily hydrolyzed, but rates on arylamides are exceedingly low.. It carries out the reaction Release of an N-terminal amino acid, preferentially leucine, but not glutamic or aspartic acids.. Its function is as follows. Presumably involved in the processing and regular turnover of intracellular proteins. Catalyzes the removal of unsubstituted N-terminal amino acids from various peptides. This Aliivibrio fischeri (strain MJ11) (Vibrio fischeri) protein is Probable cytosol aminopeptidase.